We begin with the raw amino-acid sequence, 308 residues long: HTH-type transcriptional activator AllS (308 aa).

In terms of domain architecture, HTH lysR-type spans 2 to 59 (FDPETLRTFISVAETGSFSKAAERLCKTTATISYRIKLLEENTGVGLFFRTTRSVSLT). The H-T-H motif DNA-binding region spans 19-38 (FSKAAERLCKTTATISYRIK).

Belongs to the LysR transcriptional regulatory family.

Positive regulator essential for the expression of allD operon. Binds to the allD promoter. The protein is HTH-type transcriptional activator AllS (allS) of Salmonella paratyphi A (strain ATCC 9150 / SARB42).